The primary structure comprises 253 residues: Putative cysteine-rich repeat secretory protein 33 (253 aa).

The first 28 residues, 1–28 (MFSSYSLCKCLVSFHILAIQVLISCASS), serve as a signal peptide directing secretion. 2 Gnk2-homologous domains span residues 34–133 (EYLN…MIND) and 141–250 (YDNI…LYPF).

This sequence belongs to the cysteine-rich repeat secretory protein family.

It localises to the secreted. The chain is Putative cysteine-rich repeat secretory protein 33 (CRRSP33) from Arabidopsis thaliana (Mouse-ear cress).